Reading from the N-terminus, the 238-residue chain is Modulator of macroautophagy TMEM150B (238 aa).

Residues 1–8 (MWNYLSLL) lie on the Cytoplasmic side of the membrane. A helical membrane pass occupies residues 9-29 (PVILFLWAIAGIWIVFAIAVV). N-linked (GlcNAc...) asparagine glycosylation is present at Asn30. Topologically, residues 30–51 (NGSVDLNEGFPFISICGSYAPQ) are extracellular. Residues 52 to 72 (SCIFGQVLNIGAALTVWICIV) form a helical membrane-spanning segment. The Cytoplasmic segment spans residues 73–86 (RHHQLRDWGVKTWQ). A helical transmembrane segment spans residues 87–107 (NQLILWSGILCALGTSIVGNF). Over 108–116 (QDKNQKPTH) the chain is Extracellular. Residues 117–137 (LAGAFLAFILGNLYFWLQFFL) form a helical membrane-spanning segment. Topologically, residues 138–156 (SWWVKGLPQPGPHWIKSLR) are cytoplasmic. A helical transmembrane segment spans residues 157 to 177 (LSLCSLSTILIVAMIVLHALH). Over 178–186 (MRSASAICE) the chain is Extracellular. Residues 187–207 (WVVAMLLFMLFGFFAVDFSIL) traverse the membrane as a helical segment. The Cytoplasmic portion of the chain corresponds to 208–238 (RGCTLHLHPRLDSSLPQAPSGSPNIQMAQVL).

It belongs to the DRAM/TMEM150 family.

The protein resides in the cell membrane. It is found in the endosome membrane. Its subcellular location is the cytoplasmic vesicle. It localises to the autophagosome membrane. Its function is as follows. Modulator of macroautophagy that causes accumulation of autophagosomes under basal conditions and enhances autophagic flux. Represses cell death and promotes long-term clonogenic survival of cells grown in the absence of glucose in a macroautophagy-independent manner. May have some role in extracellular matrix engulfment or growth factor receptor recycling, both of which can modulate cell survival. This is Modulator of macroautophagy TMEM150B from Mus musculus (Mouse).